Consider the following 397-residue polypeptide: Argininosuccinate synthase (397 aa).

7 to 15 is a binding site for ATP; the sequence is LYSGGLDTS. Position 83 (Tyr-83) interacts with L-citrulline. Gly-113 contributes to the ATP binding site. Residues Thr-115, Asn-119, and Asp-120 each contribute to the L-aspartate site. Asn-119 lines the L-citrulline pocket. Positions 123, 169, 178, 253, and 265 each coordinate L-citrulline.

The protein belongs to the argininosuccinate synthase family. Type 1 subfamily. In terms of assembly, homotetramer.

It is found in the cytoplasm. It carries out the reaction L-citrulline + L-aspartate + ATP = 2-(N(omega)-L-arginino)succinate + AMP + diphosphate + H(+). The protein operates within amino-acid biosynthesis; L-arginine biosynthesis; L-arginine from L-ornithine and carbamoyl phosphate: step 2/3. The polypeptide is Argininosuccinate synthase (Thermoplasma volcanium (strain ATCC 51530 / DSM 4299 / JCM 9571 / NBRC 15438 / GSS1)).